The following is a 118-amino-acid chain: Protein TusC (118 aa).

The protein belongs to the DsrF/TusC family. In terms of assembly, heterohexamer, formed by a dimer of trimers. The hexameric TusBCD complex contains 2 copies each of TusB, TusC and TusD. The TusBCD complex interacts with TusE.

Its subcellular location is the cytoplasm. Functionally, part of a sulfur-relay system required for 2-thiolation of 5-methylaminomethyl-2-thiouridine (mnm(5)s(2)U) at tRNA wobble positions. This Salmonella typhimurium (strain LT2 / SGSC1412 / ATCC 700720) protein is Protein TusC.